A 436-amino-acid polypeptide reads, in one-letter code: MALNVNRAVADPFYRYKMPKLSAKVEGKGNGIKTVISNMSEIAKALERPPMYPTKYFGCELGAQTNFDAKNERYIVNGEHDANKLQDILDGFIKKFVLCKSCENPETQLFVRKNNIKSKCKACGCSFDIDLKHKLSTFIMKNPPKIDVDFSKAEQKNGKKTSGADAAAAVAADIIHNSDKGSSNDDDDDDWEPEPVEPNGMLSAGMGKLVLDKDLEKSEEQRLDMLHTFFLKAKEEDRISDAKGQTALRDEAERLELKQKASLLLANVFLDEKVITDKQISKHRNLLLRFTLNDKKAQRYLLGGVEQVIHKHEAELLSKSAHIIKSLYDEDVCEEDSLISWGEKPSSKYVSKSFAKKIIENSQPVLNWLKEAEEETEEESDDEIAFGGDVKESEFLRQQKEKAAREAQQKSAKATNGNAAAASGANDEEDLDIDDI.

27–34 (GKGNGIKT) contacts GTP. The tract at residues 177–203 (NSDKGSSNDDDDDDWEPEPVEPNGMLS) is disordered. The span at 184–195 (NDDDDDDWEPEP) shows a compositional bias: acidic residues. Residues 216 to 379 (EKSEEQRLDM…KEAEEETEEE (164 aa)) form the W2 domain. Residues 396-408 (LRQQKEKAAREAQ) are compositionally biased toward basic and acidic residues. The tract at residues 396 to 436 (LRQQKEKAAREAQQKSAKATNGNAAAASGANDEEDLDIDDI) is disordered. The span at 409-425 (QKSAKATNGNAAAASGA) shows a compositional bias: low complexity. The segment covering 426–436 (NDEEDLDIDDI) has biased composition (acidic residues).

This sequence belongs to the eIF-2-beta/eIF-5 family.

Functionally, catalyzes the hydrolysis of GTP bound to the 40S ribosomal initiation complex (40S.mRNA.Met-tRNA[F].eIF-2.GTP) with the subsequent joining of a 60S ribosomal subunit resulting in the release of eIF-2 and the guanine nucleotide. The subsequent joining of a 60S ribosomal subunit results in the formation of a functional 80S initiation complex (80S.mRNA.Met-tRNA[F]). The sequence is that of Eukaryotic translation initiation factor 5 from Caenorhabditis elegans.